The following is a 148-amino-acid chain: Protoporphyrinogen IX oxidase (148 aa).

4 helical membrane passes run 7-27, 59-79, 86-106, and 128-148; these read YFLWVKAFHVIAVISWMAALF, FIASPAMGFTLITGILMLLIA, GGWLHAKLALVVLLLIYHFYC, and FNEIPTILMILIVILVVVKPF. Residue histidine 15 participates in heme binding. Position 92 (lysine 92) interacts with heme.

It belongs to the HemJ family. As to quaternary structure, homodimer. The cofactor is heme b.

The protein resides in the cell membrane. It carries out the reaction protoporphyrinogen IX + 3 A = protoporphyrin IX + 3 AH2. The protein operates within porphyrin-containing compound metabolism; protoporphyrin-IX biosynthesis; protoporphyrin-IX from protoporphyrinogen-IX: step 1/1. In terms of biological role, catalyzes the oxidation of protoporphyrinogen IX to protoporphyrin IX. Is involved in the biosynthesis of tetrapyrrole molecules like heme. Does not use oxygen or artificial electron acceptors such as menadione or benzoquinone. This chain is Protoporphyrinogen IX oxidase, found in Helicobacter pylori (strain J99 / ATCC 700824) (Campylobacter pylori J99).